The chain runs to 575 residues: V-type ATP synthase alpha chain (575 aa).

Residue 238 to 245 (GPFGAGKT) coordinates ATP.

It belongs to the ATPase alpha/beta chains family.

The catalysed reaction is ATP + H2O + 4 H(+)(in) = ADP + phosphate + 5 H(+)(out). In terms of biological role, produces ATP from ADP in the presence of a proton gradient across the membrane. The V-type alpha chain is a catalytic subunit. The chain is V-type ATP synthase alpha chain (atpA) from Borreliella burgdorferi (strain ATCC 35210 / DSM 4680 / CIP 102532 / B31) (Borrelia burgdorferi).